Reading from the N-terminus, the 504-residue chain is Anaerobic nitric oxide reductase transcription regulator NorR (504 aa).

Asp-57 carries the post-translational modification 4-aspartylphosphate. The 230-residue stretch at Met-187–Val-416 folds into the Sigma-54 factor interaction domain. Residues Gly-215 to Glu-222 and Ala-278 to Glu-287 each bind ATP. Residues Trp-479–Lys-498 constitute a DNA-binding region (H-T-H motif).

Its pathway is nitrogen metabolism; nitric oxide reduction. Its function is as follows. Required for the expression of anaerobic nitric oxide (NO) reductase, acts as a transcriptional activator for at least the norVW operon. Activation also requires sigma-54. The chain is Anaerobic nitric oxide reductase transcription regulator NorR from Escherichia coli O45:K1 (strain S88 / ExPEC).